The sequence spans 31 residues: Sarcolipin (31 aa).

The Cytoplasmic segment spans residues 1 to 7 (MERSTQE). Residues 8 to 26 (LFINFTVVLITVLLMWLLV) form a helical membrane-spanning segment. Topologically, residues 27-31 (RSYQY) are lumenal.

This sequence belongs to the sarcolipin family. In terms of assembly, homooligomer. Can also form heterooligomers with other sarcoplasmic/endoplasmic reticulum calcium ATPase (SERCA) regulators ARLN, ERLN, PLN and STRIT1/DWORF. Monomer. Interacts with calcium ATPase ATP2A1/SERCA1. Interacts as a monomer with ATP2A2/SERCA2; the interaction decreases ATP2A2 Ca(2+) affinity. Interacts with VMP1; VMP1 competes with PLN and SLN to prevent them from forming an inhibitory complex with ATP2A2.

It localises to the sarcoplasmic reticulum membrane. Its subcellular location is the endoplasmic reticulum membrane. Reversibly inhibits the activity of ATP2A1/SERCA1 and ATP2A2/SERCA2 in sarcoplasmic reticulum by decreasing the apparent affinity of the ATPase for Ca(2+). Also inhibits the activity of ATP2A3/SERCA3. Modulates calcium re-uptake during muscle relaxation and plays an important role in calcium homeostasis in muscle. Required for muscle-based, non-shivering thermogenesis. The sequence is that of Sarcolipin (Sln) from Rattus norvegicus (Rat).